The chain runs to 201 residues: Recombination protein RecR (201 aa).

The C4-type zinc finger occupies C60–C75. The Toprim domain maps to K83–P177.

The protein belongs to the RecR family.

Its function is as follows. May play a role in DNA repair. It seems to be involved in an RecBC-independent recombinational process of DNA repair. It may act with RecF and RecO. This is Recombination protein RecR from Prochlorococcus marinus (strain MIT 9215).